The primary structure comprises 217 residues: Uracil-DNA glycosylase (217 aa).

The active-site Proton acceptor is the D62.

It belongs to the uracil-DNA glycosylase (UDG) superfamily. UNG family.

It localises to the cytoplasm. It carries out the reaction Hydrolyzes single-stranded DNA or mismatched double-stranded DNA and polynucleotides, releasing free uracil.. In terms of biological role, excises uracil residues from the DNA which can arise as a result of misincorporation of dUMP residues by DNA polymerase or due to deamination of cytosine. The sequence is that of Uracil-DNA glycosylase from Streptococcus pyogenes serotype M4 (strain MGAS10750).